A 197-amino-acid polypeptide reads, in one-letter code: Small ribosomal subunit protein uS11m (197 aa).

The span at 43 to 52 (AAKEEVEKAE) shows a compositional bias: basic and acidic residues. Residues 43-66 (AAKEEVEKAETPAPAPSRSSFSIY) are disordered.

Belongs to the universal ribosomal protein uS11 family. Component of the mitochondrial ribosome small subunit (28S) which comprises a 12S rRNA and about 30 distinct proteins.

It localises to the mitochondrion. This Bos taurus (Bovine) protein is Small ribosomal subunit protein uS11m (MRPS11).